The chain runs to 612 residues: UPF0329 protein ECU05_1680/ECU11_0050 (612 aa).

A compositionally biased stretch (basic and acidic residues) spans 304–330 (RQRREMEKKEEEKKKEEEKKKEEEKRK). Positions 304 to 424 (RQRREMEKKE…RKRYKIHRRV (121 aa)) are disordered. Basic residues predominate over residues 331–349 (EEKKKKKEEKKEEKKKKKE). A compositionally biased stretch (basic and acidic residues) spans 350 to 388 (EKKEEKKEEKKEEKKEEKKEEKKEEKKEEKSGKSLREGE).

The protein belongs to the UPF0329 family.

This Encephalitozoon cuniculi (strain GB-M1) (Microsporidian parasite) protein is UPF0329 protein ECU05_1680/ECU11_0050.